The primary structure comprises 243 residues: DNA repair protein RecO (243 aa).

The protein belongs to the RecO family.

Its function is as follows. Involved in DNA repair and RecF pathway recombination. The sequence is that of DNA repair protein RecO from Caulobacter vibrioides (strain NA1000 / CB15N) (Caulobacter crescentus).